The sequence spans 203 residues: Thymidylate kinase (203 aa).

14–21 (GGEGSGKS) serves as a coordination point for ATP.

Belongs to the thymidylate kinase family.

The catalysed reaction is dTMP + ATP = dTDP + ADP. In terms of biological role, phosphorylation of dTMP to form dTDP in both de novo and salvage pathways of dTTP synthesis. The chain is Thymidylate kinase from Rickettsia canadensis (strain McKiel).